The following is a 352-amino-acid chain: Schlafen-like protein 4 (352 aa).

The SLFN-like fold stretch occupies residues 87-235; it reads FEYQSNFSEV…SDKVYQISSG (149 aa). A helical membrane pass occupies residues 326–343; the sequence is IQNIGWIFFGTALSCCIY.

The protein belongs to the Schlafen family. Component of the PUCH (precursor of 21U RNA 5'-end cleavage holoenzyme) complex; consisting of tofu-1, tofu-2 and either slfl-3 or slfl-4.

Its subcellular location is the membrane. In terms of biological role, component of the trimeric PUCH (precursor of 21U RNA 5'-end cleavage holoenzyme) complex, that acts as an endoribonuclease processing the 5'-end of precursor Piwi-interacting RNAs (piRNAs). The PUCH complex consists of tofu-1, tofu-2 and either slfl-3 or slfl-4, where tofu-2 exhibits endoribonuclease activity. PUCH-mediated processing strictly requires a 7-methyl-G cap (m7 G-cap) and an uracil at position three (U3). PUCH also exhibits a strict bias for piRNA precursors with an A or G at position 1. Mature piRNA production is enhanced by the interaction of PUCH with the PETISCO complex, which is stabilizing piRNA precursors and allows their processing by PUCH. The protein is Schlafen-like protein 4 of Caenorhabditis elegans.